A 245-amino-acid chain; its full sequence is 1-(5-phosphoribosyl)-5-[(5-phosphoribosylamino)methylideneamino] imidazole-4-carboxamide isomerase (245 aa).

Residue aspartate 8 is the Proton acceptor of the active site. Catalysis depends on aspartate 129, which acts as the Proton donor.

Belongs to the HisA/HisF family.

It is found in the cytoplasm. The enzyme catalyses 1-(5-phospho-beta-D-ribosyl)-5-[(5-phospho-beta-D-ribosylamino)methylideneamino]imidazole-4-carboxamide = 5-[(5-phospho-1-deoxy-D-ribulos-1-ylimino)methylamino]-1-(5-phospho-beta-D-ribosyl)imidazole-4-carboxamide. The protein operates within amino-acid biosynthesis; L-histidine biosynthesis; L-histidine from 5-phospho-alpha-D-ribose 1-diphosphate: step 4/9. In Rhodopseudomonas palustris (strain ATCC BAA-98 / CGA009), this protein is 1-(5-phosphoribosyl)-5-[(5-phosphoribosylamino)methylideneamino] imidazole-4-carboxamide isomerase.